The following is a 243-amino-acid chain: Zinc import ATP-binding protein ZnuC (243 aa).

The 218-residue stretch at 8 to 225 folds into the ABC transporter domain; it reads LNLSNVSYYI…SEFQKLFGHH (218 aa). Residue 40–47 participates in ATP binding; sequence GPNGAGKS.

Belongs to the ABC transporter superfamily. Zinc importer (TC 3.A.1.15.5) family. As to quaternary structure, the complex is composed of two ATP-binding proteins (ZnuC), two transmembrane proteins (ZnuB) and a solute-binding protein (ZnuA).

The protein resides in the cell inner membrane. The catalysed reaction is Zn(2+)(out) + ATP(in) + H2O(in) = Zn(2+)(in) + ADP(in) + phosphate(in) + H(+)(in). Part of the ABC transporter complex ZnuABC involved in zinc import. Responsible for energy coupling to the transport system. This chain is Zinc import ATP-binding protein ZnuC, found in Psychrobacter cryohalolentis (strain ATCC BAA-1226 / DSM 17306 / VKM B-2378 / K5).